A 182-amino-acid polypeptide reads, in one-letter code: Troponin I, fast skeletal muscle (182 aa).

Gly-2 carries the N-acetylglycine modification. Residues 2 to 48 (GDEEKRNRAITARRQHLKSVMLQIAATELEKEESRREAEKQNYLAEH) are involved in binding TNC. A Phosphothreonine modification is found at Thr-12. Residues 97-117 (NQKLFDLRGKFKRPPLRRVRM) are involved in binding TNC and actin. Ser-118 bears the Phosphoserine mark.

This sequence belongs to the troponin I family. As to quaternary structure, binds to actin and tropomyosin.

Its function is as follows. Troponin I is the inhibitory subunit of troponin, the thin filament regulatory complex which confers calcium-sensitivity to striated muscle actomyosin ATPase activity. The sequence is that of Troponin I, fast skeletal muscle (TNNI2) from Homo sapiens (Human).